The following is a 314-amino-acid chain: MTEGKRLQQMELPQMKSIWIDEDQEMEKLYGFQVRQRFMNGPSTDSDEDADEDLGIVLVDSKKLALPNKNNIKLPPLPNYMTINPNINSNHKSLTNKKKNFLGMFKKKDLLSRRHGSAKTAKQSSISTPFDFHHISHANGKREDNPLESHEEKHDVESLVKFTSLAPQPRPDSNVSSKYSNVVMNDSSRIVSSSTIATTMDSHHDGNETNNTPNGNKQLDSPTDLEMTLEDLRNYTFPSVLGDSVSEKTNPSSPSVSSFSGKFKPRELSALHTPELGNCFNVDQSLNSPGNRISVDDVLKFYYQCSETSTPRNT.

Disordered stretches follow at residues 112 to 156 (SRRH…KHDV), 199 to 221 (TMDSHHDGNETNNTPNGNKQLDS), and 241 to 261 (LGDSVSEKTNPSSPSVSSFSG). Positions 126–139 (ISTPFDFHHISHAN) constitute a CRIB domain. A compositionally biased stretch (basic and acidic residues) spans 140–156 (GKREDNPLESHEEKHDV). Residues 208–221 (ETNNTPNGNKQLDS) show a composition bias toward polar residues. The span at 251 to 260 (PSSPSVSSFS) shows a compositional bias: low complexity.

This sequence belongs to the BORG/CEP family. As to quaternary structure, interacts with GTP-bound CDC42.

The protein localises to the bud neck. Its subcellular location is the bud tip. It is found in the cytoplasm. It localises to the cell cortex. The protein resides in the cytoskeleton. Its function is as follows. Required for cell size and shape control, bud site selection, bud emergence, actin cytoskeletal organization, mitotic spindle orientation/positioning, and mating projection formation in response to mating pheromone. This Saccharomyces cerevisiae (strain ATCC 204508 / S288c) (Baker's yeast) protein is GTPase-interacting component 1 (GIC1).